A 313-amino-acid polypeptide reads, in one-letter code: Ribosomal RNA small subunit methyltransferase H (313 aa).

S-adenosyl-L-methionine contacts are provided by residues 33-35, D53, F80, D101, and Q108; that span reads GGH. Residues 282 to 313 are disordered; that stretch reads LVHNKPLTPSEAEIEQNPRARSAKLRVAQKLA.

Belongs to the methyltransferase superfamily. RsmH family.

The protein localises to the cytoplasm. The enzyme catalyses cytidine(1402) in 16S rRNA + S-adenosyl-L-methionine = N(4)-methylcytidine(1402) in 16S rRNA + S-adenosyl-L-homocysteine + H(+). Its function is as follows. Specifically methylates the N4 position of cytidine in position 1402 (C1402) of 16S rRNA. The protein is Ribosomal RNA small subunit methyltransferase H of Magnetococcus marinus (strain ATCC BAA-1437 / JCM 17883 / MC-1).